The primary structure comprises 263 residues: Ribosomal RNA small subunit methyltransferase A (263 aa).

Residues His-13, Leu-15, Gly-40, Glu-61, Asp-86, and Asn-105 each contribute to the S-adenosyl-L-methionine site.

Belongs to the class I-like SAM-binding methyltransferase superfamily. rRNA adenine N(6)-methyltransferase family. RsmA subfamily.

Its subcellular location is the cytoplasm. It carries out the reaction adenosine(1518)/adenosine(1519) in 16S rRNA + 4 S-adenosyl-L-methionine = N(6)-dimethyladenosine(1518)/N(6)-dimethyladenosine(1519) in 16S rRNA + 4 S-adenosyl-L-homocysteine + 4 H(+). In terms of biological role, specifically dimethylates two adjacent adenosines (A1518 and A1519) in the loop of a conserved hairpin near the 3'-end of 16S rRNA in the 30S particle. May play a critical role in biogenesis of 30S subunits. The polypeptide is Ribosomal RNA small subunit methyltransferase A (Dichelobacter nodosus (strain VCS1703A)).